The chain runs to 355 residues: Peptide chain release factor 1 (355 aa).

Q231 carries the N5-methylglutamine modification.

Belongs to the prokaryotic/mitochondrial release factor family. In terms of processing, methylated by PrmC. Methylation increases the termination efficiency of RF1.

The protein localises to the cytoplasm. Peptide chain release factor 1 directs the termination of translation in response to the peptide chain termination codons UAG and UAA. In Erythrobacter litoralis (strain HTCC2594), this protein is Peptide chain release factor 1.